A 227-amino-acid polypeptide reads, in one-letter code: GFP-like non-fluorescent chromoprotein (227 aa).

Positions 63 to 65 (EYG) form a cross-link, 2-iminomethyl-5-imidazolinone (Glu-Gly). The residue at position 64 (tyrosine 64) is a 2,3-didehydrotyrosine.

This sequence belongs to the GFP family. In terms of assembly, homotetramer. In terms of processing, contains a chromophore consisting of modified amino acid residues. The chromophore is formed by autocatalytic backbone condensation between Xaa-N and Gly-(N+2), oxidation of Tyr-(N+1) to didehydrotyrosine, and formation of a double bond to the alpha-amino nitrogen of residue Xaa-N. Maturation of the chromophore requires nothing other than molecular oxygen. The precise stereochemistry of the tyrosine has not been determined.

Non-fluorescent pigment protein that is lilac in color. The polypeptide is GFP-like non-fluorescent chromoprotein (Radianthus crispa (Leathery sea anemone)).